We begin with the raw amino-acid sequence, 98 residues long: MVAIHKPAHDVILKPVVSEKSYAASDRGQYTFVVAPDANKVQIKQAIEEIFKVKVTNVNTLNRAGKKQRTRTGFGQRASQKRAIVTVAEGQTIDIFGN.

The protein belongs to the universal ribosomal protein uL23 family. Part of the 50S ribosomal subunit. Contacts protein L29, and trigger factor when it is bound to the ribosome.

One of the early assembly proteins it binds 23S rRNA. One of the proteins that surrounds the polypeptide exit tunnel on the outside of the ribosome. Forms the main docking site for trigger factor binding to the ribosome. The sequence is that of Large ribosomal subunit protein uL23 from Bifidobacterium longum (strain DJO10A).